A 314-amino-acid polypeptide reads, in one-letter code: Dihydroorotate dehydrogenase (fumarate) (314 aa).

Residues Lys-46, 70–74, and Asn-130 contribute to the substrate site; that span reads NSMGL. FMN is bound at residue 46-47; sequence KS. Asn-130 is a binding site for FMN. Active-site nucleophile residues include Ser-132 and Cys-133. The FMN site is built by Lys-167 and Ile-195. Substrate is bound at residue 196–197; it reads NS. FMN contacts are provided by residues Gly-224, 252–253, and 274–275; these read GG and GT.

Belongs to the dihydroorotate dehydrogenase family. Type 1 subfamily. Homodimer. FMN serves as cofactor.

It is found in the cytoplasm. It carries out the reaction (S)-dihydroorotate + fumarate = orotate + succinate. Its pathway is pyrimidine metabolism; UMP biosynthesis via de novo pathway. Catalyzes the conversion of dihydroorotate to orotate with fumarate as the electron acceptor. The chain is Dihydroorotate dehydrogenase (fumarate) (URA1) from Saccharomyces mikatae (Yeast).